The chain runs to 239 residues: Phosphoribosylaminoimidazole-succinocarboxamide synthase (239 aa).

The protein belongs to the SAICAR synthetase family.

The enzyme catalyses 5-amino-1-(5-phospho-D-ribosyl)imidazole-4-carboxylate + L-aspartate + ATP = (2S)-2-[5-amino-1-(5-phospho-beta-D-ribosyl)imidazole-4-carboxamido]succinate + ADP + phosphate + 2 H(+). The protein operates within purine metabolism; IMP biosynthesis via de novo pathway; 5-amino-1-(5-phospho-D-ribosyl)imidazole-4-carboxamide from 5-amino-1-(5-phospho-D-ribosyl)imidazole-4-carboxylate: step 1/2. The sequence is that of Phosphoribosylaminoimidazole-succinocarboxamide synthase from Bacillus thuringiensis subsp. konkukian (strain 97-27).